An 88-amino-acid chain; its full sequence is Kunitz-type U15-theraphotoxin-Hs1d (88 aa).

The signal sequence occupies residues 1 to 27 (MGTARFLSAVLLLSVLLMVTFPALLSA). Positions 28–33 (EYHDGR) are excised as a propeptide. The BPTI/Kunitz inhibitor domain maps to 37–85 (CSLPSDSGDCLRFFEMWYFDGTTCTKFVYGGYGGNGNRFPTEKACMKRC). 2 cysteine pairs are disulfide-bonded: C37/C85 and C60/C81.

Belongs to the venom Kunitz-type family. 03 (sub-Kunitz) subfamily. As to expression, expressed by the venom gland.

The protein resides in the secreted. Its function is as follows. Serine protease inhibitor that inhibits trypsin at a molar ratio of 1:1. This is Kunitz-type U15-theraphotoxin-Hs1d from Cyriopagopus schmidti (Chinese bird spider).